A 213-amino-acid polypeptide reads, in one-letter code: Orotate phosphoribosyltransferase (213 aa).

A 5-phospho-alpha-D-ribose 1-diphosphate-binding site is contributed by Lys26. Residue 34–35 (FF) participates in orotate binding. 5-phospho-alpha-D-ribose 1-diphosphate contacts are provided by residues 72–73 (YK), Arg99, Lys100, Lys103, His105, and 124–132 (DDVITAGTA). Orotate is bound by residues Thr128 and Arg156.

It belongs to the purine/pyrimidine phosphoribosyltransferase family. PyrE subfamily. In terms of assembly, homodimer. Mg(2+) serves as cofactor.

The catalysed reaction is orotidine 5'-phosphate + diphosphate = orotate + 5-phospho-alpha-D-ribose 1-diphosphate. Its pathway is pyrimidine metabolism; UMP biosynthesis via de novo pathway; UMP from orotate: step 1/2. Catalyzes the transfer of a ribosyl phosphate group from 5-phosphoribose 1-diphosphate to orotate, leading to the formation of orotidine monophosphate (OMP). The sequence is that of Orotate phosphoribosyltransferase from Alteromonas mediterranea (strain DSM 17117 / CIP 110805 / LMG 28347 / Deep ecotype).